The primary structure comprises 1007 residues: Serine/threonine-protein kinase atg1 (1007 aa).

One can recognise a Protein kinase domain in the interval 30–336 (YTRLSEIGRG…FDVYFAHKVL (307 aa)). Residues 36 to 44 (IGRGSFAVV) and K59 contribute to the ATP site. Residue D174 is the Proton acceptor of the active site. Disordered stretches follow at residues 343–489 (LVAD…KEHA), 524–586 (GGQA…PTSA), 795–817 (RLPS…GSGT), and 878–900 (SRPG…DGGQ). Basic and acidic residues predominate over residues 373–387 (MKRENALSGGVRDEP). Polar residues predominate over residues 396 to 410 (AMTQSPRPETPSTPM). Over residues 477–489 (KPVEKAKDEKEHA) the composition is skewed to basic and acidic residues. Residues 534 to 555 (SGAAPGTPPAGGSSPHASPSKA) show a composition bias toward low complexity. The segment covering 563–579 (SRADSAHVRQNSYDRRY) has biased composition (basic and acidic residues). Residues 805–817 (SNLSVGSSLGSGT) show a composition bias toward low complexity. Residues 887–896 (DRADARRDNE) are compositionally biased toward basic and acidic residues.

The protein belongs to the protein kinase superfamily. Ser/Thr protein kinase family. APG1/unc-51/ULK1 subfamily. In terms of assembly, homodimer. Forms a ternary complex with ATG13 and ATG17.

It localises to the cytoplasm. Its subcellular location is the preautophagosomal structure membrane. It catalyses the reaction L-seryl-[protein] + ATP = O-phospho-L-seryl-[protein] + ADP + H(+). The enzyme catalyses L-threonyl-[protein] + ATP = O-phospho-L-threonyl-[protein] + ADP + H(+). Serine/threonine protein kinase involved in the cytoplasm to vacuole transport (Cvt) and found to be essential in autophagy, where it is required for the formation of autophagosomes. Involved in the clearance of protein aggregates which cannot be efficiently cleared by the proteasome. Required for selective autophagic degradation of the nucleus (nucleophagy) as well as for mitophagy which contributes to regulate mitochondrial quantity and quality by eliminating the mitochondria to a basal level to fulfill cellular energy requirements and preventing excess ROS production. Also involved in endoplasmic reticulum-specific autophagic process, in selective removal of ER-associated degradation (ERAD) substrates. Plays a key role in ATG9 and ATG23 cycling through the pre-autophagosomal structure and is necessary to promote ATG18 binding to ATG9 through phosphorylation of ATG9. Catalyzes phosphorylation of ATG4, decreasing the interaction between ATG4 and ATG8 and impairing deconjugation of PE-conjugated forms of ATG8. In Aspergillus niger (strain ATCC MYA-4892 / CBS 513.88 / FGSC A1513), this protein is Serine/threonine-protein kinase atg1.